The chain runs to 422 residues: S-adenosylmethionine synthase (422 aa).

His-16 is an ATP binding site. Asp-18 lines the Mg(2+) pocket. Glu-44 is a binding site for K(+). L-methionine-binding residues include Glu-57 and Gln-100. The segment at 100 to 110 (QSPDISQGVSA) is flexible loop. ATP-binding positions include 175-177 (DGK), 251-252 (KF), Asp-260, 266-267 (RK), Ala-283, and Lys-287. Asp-260 contributes to the L-methionine binding site. Lys-291 lines the L-methionine pocket.

This sequence belongs to the AdoMet synthase family. Homotetramer; dimer of dimers. Mg(2+) is required as a cofactor. The cofactor is K(+).

It is found in the cytoplasm. The catalysed reaction is L-methionine + ATP + H2O = S-adenosyl-L-methionine + phosphate + diphosphate. It participates in amino-acid biosynthesis; S-adenosyl-L-methionine biosynthesis; S-adenosyl-L-methionine from L-methionine: step 1/1. Its function is as follows. Catalyzes the formation of S-adenosylmethionine (AdoMet) from methionine and ATP. The overall synthetic reaction is composed of two sequential steps, AdoMet formation and the subsequent tripolyphosphate hydrolysis which occurs prior to release of AdoMet from the enzyme. This Rippkaea orientalis (strain PCC 8801 / RF-1) (Cyanothece sp. (strain PCC 8801)) protein is S-adenosylmethionine synthase.